Reading from the N-terminus, the 150-residue chain is Deoxyuridine 5'-triphosphate nucleotidohydrolase (150 aa).

Residues 69–71 (RSG), Asn82, 86–88 (LID), and Met96 contribute to the substrate site.

Belongs to the dUTPase family. The cofactor is Mg(2+).

It catalyses the reaction dUTP + H2O = dUMP + diphosphate + H(+). It participates in pyrimidine metabolism; dUMP biosynthesis; dUMP from dCTP (dUTP route): step 2/2. This enzyme is involved in nucleotide metabolism: it produces dUMP, the immediate precursor of thymidine nucleotides and it decreases the intracellular concentration of dUTP so that uracil cannot be incorporated into DNA. This chain is Deoxyuridine 5'-triphosphate nucleotidohydrolase, found in Leptothrix cholodnii (strain ATCC 51168 / LMG 8142 / SP-6) (Leptothrix discophora (strain SP-6)).